A 728-amino-acid chain; its full sequence is Procollagen-lysine,2-oxoglutarate 5-dioxygenase 1 (728 aa).

Positions 1–18 (MRSLLLLASLAWLLLAQA) are cleaved as a signal peptide. N-linked (GlcNAc...) asparagine glycans are attached at residues asparagine 177, asparagine 198, and asparagine 539. The Fe2OG dioxygenase domain occupies 637–728 (QFDLAFVVRY…RYIAVSFVDP (92 aa)). 2 residues coordinate Fe cation: histidine 657 and aspartate 659. The N-linked (GlcNAc...) asparagine glycan is linked to asparagine 687. Histidine 709 contributes to the Fe cation binding site. The active site involves arginine 719.

As to quaternary structure, homodimer. Identified in a complex with P3H3 and P3H4. Fe(2+) is required as a cofactor. The cofactor is L-ascorbate.

It is found in the rough endoplasmic reticulum membrane. It carries out the reaction L-lysyl-[collagen] + 2-oxoglutarate + O2 = (5R)-5-hydroxy-L-lysyl-[collagen] + succinate + CO2. Its function is as follows. Part of a complex composed of PLOD1, P3H3 and P3H4 that catalyzes hydroxylation of lysine residues in collagen alpha chains and is required for normal assembly and cross-linkling of collagen fibrils. Forms hydroxylysine residues in -Xaa-Lys-Gly- sequences in collagens. These hydroxylysines serve as sites of attachment for carbohydrate units and are essential for the stability of the intermolecular collagen cross-links. In Rattus norvegicus (Rat), this protein is Procollagen-lysine,2-oxoglutarate 5-dioxygenase 1 (Plod1).